Reading from the N-terminus, the 128-residue chain is Glycine cleavage system H protein (128 aa).

Residues 25–107 (TVRVGITDFA…YEGGWLFEIT (83 aa)) enclose the Lipoyl-binding domain. Lys66 is subject to N6-lipoyllysine.

The protein belongs to the GcvH family. In terms of assembly, the glycine cleavage system is composed of four proteins: P, T, L and H. The cofactor is (R)-lipoate.

The glycine cleavage system catalyzes the degradation of glycine. The H protein shuttles the methylamine group of glycine from the P protein to the T protein. In Micrococcus luteus (strain ATCC 4698 / DSM 20030 / JCM 1464 / CCM 169 / CCUG 5858 / IAM 1056 / NBRC 3333 / NCIMB 9278 / NCTC 2665 / VKM Ac-2230) (Micrococcus lysodeikticus), this protein is Glycine cleavage system H protein.